The sequence spans 242 residues: Type III pantothenate kinase (242 aa).

An ATP-binding site is contributed by Asp5 to Lys12. Substrate-binding positions include Tyr94 and Gly100–Arg103. Asp102 functions as the Proton acceptor in the catalytic mechanism. Thr124 is a binding site for ATP. Thr175 is a binding site for substrate.

It belongs to the type III pantothenate kinase family. Homodimer. NH4(+) is required as a cofactor. K(+) serves as cofactor.

Its subcellular location is the cytoplasm. The enzyme catalyses (R)-pantothenate + ATP = (R)-4'-phosphopantothenate + ADP + H(+). It participates in cofactor biosynthesis; coenzyme A biosynthesis; CoA from (R)-pantothenate: step 1/5. Functionally, catalyzes the phosphorylation of pantothenate (Pan), the first step in CoA biosynthesis. The polypeptide is Type III pantothenate kinase (Psychrobacter arcticus (strain DSM 17307 / VKM B-2377 / 273-4)).